The following is a 295-amino-acid chain: Pantothenate synthetase (295 aa).

Position 30 to 37 (30 to 37) interacts with ATP; sequence MGNLHDGH. The Proton donor role is filled by His37. (R)-pantoate is bound at residue Gln61. Residue Gln61 coordinates beta-alanine. 149–152 serves as a coordination point for ATP; that stretch reads GEKD. Gln155 serves as a coordination point for (R)-pantoate. ATP contacts are provided by residues Val178 and 186–189; that span reads MSSR.

The protein belongs to the pantothenate synthetase family. As to quaternary structure, homodimer.

It localises to the cytoplasm. The enzyme catalyses (R)-pantoate + beta-alanine + ATP = (R)-pantothenate + AMP + diphosphate + H(+). It participates in cofactor biosynthesis; (R)-pantothenate biosynthesis; (R)-pantothenate from (R)-pantoate and beta-alanine: step 1/1. Catalyzes the condensation of pantoate with beta-alanine in an ATP-dependent reaction via a pantoyl-adenylate intermediate. The chain is Pantothenate synthetase from Photobacterium profundum (strain SS9).